A 94-amino-acid chain; its full sequence is Scorpine (94 aa).

A signal peptide spans 1–19 (MNSKLTALIFLGLIAIAYC). Residues 55-94 (EFQCMANMDMLGNCEKHCQTSGEKGYCHGTKCKCGTPLSY) form the BetaSPN-type CS-alpha/beta domain. Disulfide bonds link Cys58-Cys81, Cys68-Cys86, and Cys72-Cys88.

This sequence belongs to the long chain scorpion toxin family. Class 3 subfamily. Expressed by the venom gland.

Its subcellular location is the secreted. It localises to the target cell membrane. Functionally, this full-length protein shows antibacterial activity against B.subtilis and K.pneumoniae. Also shows a potent inhibitory effect on the ookinete (ED(50) 0.7 uM) and gamete (ED(50) 10 uM) stages of Plasmodium berghei development. In addition, induces cell membrane disruption, leakage currents and cell death on HEK293 cell line (tested at 25 uM). This Pandinus imperator (Emperor scorpion) protein is Scorpine.